We begin with the raw amino-acid sequence, 275 residues long: AA9 family lytic polysaccharide monooxygenase D (275 aa).

Residues methionine 1–alanine 17 form the signal peptide. Cu(2+) contacts are provided by histidine 18 and histidine 101. Cysteines 67 and 189 form a disulfide. Residue histidine 176 participates in O2 binding. Tyrosine 186 serves as a coordination point for Cu(2+). N-linked (GlcNAc...) asparagine glycosylation is present at asparagine 220.

This sequence belongs to the polysaccharide monooxygenase AA9 family. It depends on Cu(2+) as a cofactor.

The protein resides in the secreted. It carries out the reaction [(1-&gt;4)-beta-D-glucosyl]n+m + reduced acceptor + O2 = 4-dehydro-beta-D-glucosyl-[(1-&gt;4)-beta-D-glucosyl]n-1 + [(1-&gt;4)-beta-D-glucosyl]m + acceptor + H2O.. Functionally, lytic polysaccharide monooxygenase (LPMO) that depolymerizes crystalline and amorphous polysaccharides via the oxidation of scissile alpha- or beta-(1-4)-glycosidic bonds, yielding C1 or C4 oxidation products. Catalysis by LPMOs requires the reduction of the active-site copper from Cu(II) to Cu(I) by a reducing agent and H(2)O(2) or O(2) as a cosubstrate. The protein is AA9 family lytic polysaccharide monooxygenase D of Aspergillus tamarii.